Consider the following 424-residue polypeptide: STAM-binding protein (424 aa).

Residues 1 to 127 are interaction with CHMP3; it reads MSDHGDVSLP…YEQYKERKKK (127 aa). 2 positions are modified to phosphoserine: Ser2 and Ser48. An interaction with STAM region spans residues 227-231; that stretch reads PAKPP. Ser243 is subject to Phosphoserine. The region spanning 257-388 is the MPN domain; sequence IVVPRNLCSE…LTDYGLQEIS (132 aa). Residues His335, His337, Asp348, His350, Cys390, His396, and His398 each coordinate Zn(2+). Residues 335–348 carry the JAMM motif motif; sequence HTHPTQTAFLSSVD.

This sequence belongs to the peptidase M67C family. Interacts with STAM. Interacts with SMAD6 and SMAD7. Interacts with CHMP3; the interaction appears to relieve the autoinhibition of CHMP3. Interacts with SMURF2 and RNF11; this interaction promotes ubiquitination. It depends on Zn(2+) as a cofactor. Phosphorylated after BMP type I receptor activation. Post-translationally, ubiquitinated by SMURF2 in the presence of RNF11. Expressed in brain.

The protein localises to the nucleus. It localises to the membrane. The protein resides in the cytoplasm. Its subcellular location is the early endosome. Its activity is regulated as follows. Inhibited by N-ethylmaleimide. Zinc metalloprotease that specifically cleaves 'Lys-63'-linked polyubiquitin chains. Does not cleave 'Lys-48'-linked polyubiquitin chains. Plays a role in signal transduction for cell growth and MYC induction mediated by IL-2 and GM-CSF. Potentiates BMP (bone morphogenetic protein) signaling by antagonizing the inhibitory action of SMAD6 and SMAD7. Has a key role in regulation of cell surface receptor-mediated endocytosis and ubiquitin-dependent sorting of receptors to lysosomes. Endosomal localization of STAMBP is required for efficient EGFR degradation but not for its internalization. Involved in the negative regulation of PI3K-AKT-mTOR and RAS-MAP signaling pathways. The polypeptide is STAM-binding protein (Stambp) (Mus musculus (Mouse)).